Here is a 413-residue protein sequence, read N- to C-terminus: MSAEVDTNIPKENVPEEVVEAKTTTTTTTMEPEPLIVEDLKSTTIESTPVKIGDPTSNEQIAREEPKPTITEPSTTKSVAAEPTTEQHQETAVKLESVKEADAEAAARVESTEDADGEKALSTSQPSVSFDKTTKTHDGSPLSKFFSELPEILKVAGHNEMWGIILDPSEDHVQTSIVLEKFLRANTKDVTKAKAQLTEALKWRKAMQPQKLLVDTEFDKVKFGKLGYVTSYPTSEGGKEVITWNIYGAVKDTKKTFSDVPEFLRWRAALMELSIRELDLASATEKIPENGPDPYRMIQVHDYLNVSFLRMDPGIRAASKETIQTFSMAYPELLKEKFFVNVPMVMGWVFTAMKIFLSADTIKKFHPLSYGSDLGAEIPGIAEKLPKEYGGKGEELESGFTVKYSGDDVPKSD.

The segment at 1–141 (MSAEVDTNIP…KTTKTHDGSP (141 aa)) is disordered. The span at 85-111 (TEQHQETAVKLESVKEADAEAAARVES) shows a compositional bias: basic and acidic residues. Residues 121–131 (LSTSQPSVSFD) are compositionally biased toward polar residues. Residues 222–397 (KFGKLGYVTS…EYGGKGEELE (176 aa)) form the CRAL-TRIO domain. Residues Tyr247, Arg267, His301, Tyr303, and Lys337 each contribute to the heme site.

Belongs to the SFH5 family. The cofactor is heme b.

It is found in the cytoplasm. It localises to the endoplasmic reticulum membrane. Its subcellular location is the microsome membrane. The catalysed reaction is a 1,2-diacyl-sn-glycero-3-phospho-(1D-myo-inositol)(in) = a 1,2-diacyl-sn-glycero-3-phospho-(1D-myo-inositol)(out). Functionally, non-classical phosphatidylinositol (PtdIns) transfer protein (PITP), which exhibits PtdIns-binding/transfer activity in the absence of detectable PtdCho-binding/transfer activity. Regulates PtdIns(4,5)P2 homeostasis at the plasma membrane. Heme-binding protein that may play a role in organic oxidant-induced stress responses. This is Phosphatidylinositol transfer protein sfh5 (sfh5) from Sclerotinia sclerotiorum (strain ATCC 18683 / 1980 / Ss-1) (White mold).